The following is a 322-amino-acid chain: MGSNQLLRPRKVPKLFVFGDSYADTGNTKRDTEAWAIPYGITFPGKPSGRYCDGLIATDFLEKVLGAESPYLYRTHGRDKGLKRGMNFAFGGSKMLDSSPNSPFPNITAQVNFLVDLVLAGRVYGDITPSDVSLISYAGGDYIYYIDQNRPAAGLKALVEKVVDNLRVNMIVLGGLLFKKIAVTSLQPIGCLPSYTSASSFKSCNESQSALVELHNKLLKKVVAKLNEQSRVMKKEQHFFIIDIHNAFMTVMKNKGSKRFKNPMKSCCEGYCGRSSDGGKLYTLCDDPKSFFFWDAVHPTQEGWRSIYSVLGNPLTDFLTKP.

The Nucleophile role is filled by Ser21. Catalysis depends on residues Asp295 and His298.

This sequence belongs to the 'GDSL' lipolytic enzyme family.

The polypeptide is GDSL esterase/lipase At5g03600 (Arabidopsis thaliana (Mouse-ear cress)).